The primary structure comprises 289 residues: 2,3-dimethylmalate lyase (289 aa).

Belongs to the isocitrate lyase/PEP mutase superfamily. In terms of assembly, homotetramer. Mg(2+) serves as cofactor.

It carries out the reaction (2R,3S)-2,3-dimethylmalate = propanoate + pyruvate. It participates in cofactor degradation; nicotinate degradation; propanoate and pyruvate from 6-hydroxynicotinate: step 8/8. Its activity is regulated as follows. Completely inhibited by propionic anhydride and by cystamine. Irreversibly inhibited by the mercapto reagents iodoacetate and iodoacetamide. Unaffected by hydroxylamine. In terms of biological role, catalyzes the formation of proponate and pyruvate from (2R,3S)-2,3-dimethylmalate. Has no activity toward dimethylmaleate, malate, citramalate, isocitrate and citrate. The polypeptide is 2,3-dimethylmalate lyase (Eubacterium barkeri (Clostridium barkeri)).